Consider the following 224-residue polypeptide: Putative MgpC-like protein MPN_150 (224 aa).

Belongs to the MgpC family.

This Mycoplasma pneumoniae (strain ATCC 29342 / M129 / Subtype 1) (Mycoplasmoides pneumoniae) protein is Putative MgpC-like protein MPN_150.